Here is a 539-residue protein sequence, read N- to C-terminus: MPLNEKYERPPQPPPAYDPNHRPPSSSENSAAANVNDGQTPYHFRQDQYYNLNSKTSGAPIGSFDEAFPTENDNKPRWNDWPFTIFFLCTVGGFIAIAAITLRAWSQTYSSTGSGIYDGVNTGTLNTNAAILLVFVCIIALVFSVLGLTLCRIFPKQFIYCGMVINLVASLGTAIMYMSLRYWSAGIVFLVFTFMTAWCYWGMRSRIPLSVAVLKVVVDAMKKCPQIFFVSFVGALVASAFGFLFSAVIVATYIKYDPNSSNGGCDVSGGSCSHSKLIGVLVVVFFCGYYISEVIRNVIHCVISGVFGSWYYMSKSDQGMPRWPAFGALKRAMTYSFGSICFGSLLVALIDLLRQILQMIRHDVTSSGGGQIAIQILFMVFDWIIGFLKWLAEYFNHYAYSFIALYGKPYLRAAKETWYMLREKGMDALINDNLINIALGLFSMFASYMTALFTFLYLRFTSPQYNSNGAYNGALMAFSFVIALQICNIATEAIRSGTATFFVALGNDPEVFHHSYPHRFDEIFRAYPDVLRKLSHQNV.

The interval 1 to 38 (MPLNEKYERPPQPPPAYDPNHRPPSSSENSAAANVNDG) is disordered. The Cytoplasmic portion of the chain corresponds to 1 to 81 (MPLNEKYERP…NDNKPRWNDW (81 aa)). A compositionally biased stretch (low complexity) spans 25–36 (SSSENSAAANVN). Residues 82–102 (PFTIFFLCTVGGFIAIAAITL) form a helical membrane-spanning segment. Residues 103 to 129 (RAWSQTYSSTGSGIYDGVNTGTLNTNA) lie on the Extracellular side of the membrane. Residues 130–150 (AILLVFVCIIALVFSVLGLTL) traverse the membrane as a helical segment. At 151-157 (CRIFPKQ) the chain is on the cytoplasmic side. The helical transmembrane segment at 158-178 (FIYCGMVINLVASLGTAIMYM) threads the bilayer. Over 179–182 (SLRY) the chain is Extracellular. A helical membrane pass occupies residues 183 to 203 (WSAGIVFLVFTFMTAWCYWGM). The Cytoplasmic portion of the chain corresponds to 204 to 226 (RSRIPLSVAVLKVVVDAMKKCPQ). A helical membrane pass occupies residues 227–247 (IFFVSFVGALVASAFGFLFSA). The Extracellular segment spans residues 248 to 274 (VIVATYIKYDPNSSNGGCDVSGGSCSH). Asn-259 is a glycosylation site (N-linked (GlcNAc...) asparagine). The helical transmembrane segment at 275–295 (SKLIGVLVVVFFCGYYISEVI) threads the bilayer. At 296–332 (RNVIHCVISGVFGSWYYMSKSDQGMPRWPAFGALKRA) the chain is on the cytoplasmic side. The chain crosses the membrane as a helical span at residues 333 to 353 (MTYSFGSICFGSLLVALIDLL). At 354 to 371 (RQILQMIRHDVTSSGGGQ) the chain is on the extracellular side. A helical transmembrane segment spans residues 372–392 (IAIQILFMVFDWIIGFLKWLA). Residues 393-436 (EYFNHYAYSFIALYGKPYLRAAKETWYMLREKGMDALINDNLIN) lie on the Cytoplasmic side of the membrane. A helical membrane pass occupies residues 437-457 (IALGLFSMFASYMTALFTFLY). Residues 458-473 (LRFTSPQYNSNGAYNG) are Extracellular-facing. Residues 474 to 494 (ALMAFSFVIALQICNIATEAI) traverse the membrane as a helical segment. Topologically, residues 495–539 (RSGTATFFVALGNDPEVFHHSYPHRFDEIFRAYPDVLRKLSHQNV) are cytoplasmic.

It belongs to the CTL (choline transporter-like) family.

It is found in the cell membrane. Its function is as follows. Probably involved in transport through the plasma membrane. This Saccharomyces cerevisiae (strain ATCC 204508 / S288c) (Baker's yeast) protein is Protein PNS1 (PNS1).